The chain runs to 426 residues: Serine--tRNA ligase (426 aa).

Residue 230-232 (TSE) participates in L-serine binding. 261 to 263 (RSE) lines the ATP pocket. Residue E284 coordinates L-serine. Residue 348-351 (EISS) participates in ATP binding. S384 contributes to the L-serine binding site.

Belongs to the class-II aminoacyl-tRNA synthetase family. Type-1 seryl-tRNA synthetase subfamily. Homodimer. The tRNA molecule binds across the dimer.

It is found in the cytoplasm. It catalyses the reaction tRNA(Ser) + L-serine + ATP = L-seryl-tRNA(Ser) + AMP + diphosphate + H(+). The catalysed reaction is tRNA(Sec) + L-serine + ATP = L-seryl-tRNA(Sec) + AMP + diphosphate + H(+). Its pathway is aminoacyl-tRNA biosynthesis; selenocysteinyl-tRNA(Sec) biosynthesis; L-seryl-tRNA(Sec) from L-serine and tRNA(Sec): step 1/1. Catalyzes the attachment of serine to tRNA(Ser). Is also able to aminoacylate tRNA(Sec) with serine, to form the misacylated tRNA L-seryl-tRNA(Sec), which will be further converted into selenocysteinyl-tRNA(Sec). In Sphingopyxis alaskensis (strain DSM 13593 / LMG 18877 / RB2256) (Sphingomonas alaskensis), this protein is Serine--tRNA ligase.